The chain runs to 35 residues: Photosystem II reaction center protein T (35 aa).

The chain crosses the membrane as a helical span at residues alanine 3–phenylalanine 23.

The protein belongs to the PsbT family. As to quaternary structure, PSII is composed of 1 copy each of membrane proteins PsbA, PsbB, PsbC, PsbD, PsbE, PsbF, PsbH, PsbI, PsbJ, PsbK, PsbL, PsbM, PsbT, PsbY, PsbZ, Psb30/Ycf12, at least 3 peripheral proteins of the oxygen-evolving complex and a large number of cofactors. It forms dimeric complexes.

The protein localises to the plastid. It localises to the chloroplast thylakoid membrane. Functionally, found at the monomer-monomer interface of the photosystem II (PS II) dimer, plays a role in assembly and dimerization of PSII. PSII is a light-driven water plastoquinone oxidoreductase, using light energy to abstract electrons from H(2)O, generating a proton gradient subsequently used for ATP formation. The polypeptide is Photosystem II reaction center protein T (Chaetosphaeridium globosum (Charophycean green alga)).